The chain runs to 2217 residues: Protein irg-7 (2217 aa).

Positions 1–16 are cleaved as a signal peptide; it reads MRNWVLIAALAVICLA. 2 EGF-like domains span residues 370-405 and 864-896; these read SGSTCSQMLCANGGFLPTPTSDRCQCPEGFSGFHCQ and TGTYCQNIICYNGGTASGDHCVCPPGYAGESCE. Intrachain disulfides connect Cys-379–Cys-393, Cys-395–Cys-404, Cys-868–Cys-873, Cys-886–Cys-895, Cys-1212–Cys-1312, Cys-1285–Cys-1304, Cys-1508–Cys-1521, and Cys-1523–Cys-1532. Residues 1188 to 1313 form the C-type lectin domain; the sequence is IGQYCIKFMA…CAEPRAFACQ (126 aa). One can recognise an EGF-like 3 domain in the interval 1499 to 1533; that stretch reads TGSRCTVPICVNGGTRNPDEATCSCPDGYEGPNCQ. The 187-residue stretch at 2016–2202 folds into the VWFA domain; the sequence is DVVFMIDGSQ…NNQIKTIQQL (187 aa).

It is found in the secreted. In terms of biological role, plays a role in innate immunity, probably via the atf-7 pathway, to confer resistance to pathogenic bacteria. May also play a role in the regulation of longevity. The protein is Protein irg-7 of Caenorhabditis elegans.